Consider the following 372-residue polypeptide: Nucleosome assembly protein 1;1 (372 aa).

The stretch at 26 to 80 (VNALKNKLQNLAGQRSDVLENLTPNVRKRVDALRDIQSQHDELEAKFREERAILE) forms a coiled coil. Serine 41 carries the post-translational modification Phosphoserine. Residues 47-62 (LTPNVRKRVDALRDIQ) carry the Nuclear export signal motif. A Nuclear localization signal motif is present at residues 223 to 228 (KKKPKK). Residues 299–372 (AMEAEDFEID…DERPPECKQQ (74 aa)) are disordered. Residues 300 to 337 (MEAEDFEIDDDEEDDIDEDEDEEDEEDEEDDDDEDEEE) are compositionally biased toward acidic residues. Basic and acidic residues predominate over residues 360–372 (GKQDERPPECKQQ). Position 369 is a cysteine methyl ester (cysteine 369). Cysteine 369 carries S-farnesyl cysteine lipidation. Residues 370-372 (KQQ) constitute a propeptide, removed in mature form.

Belongs to the nucleosome assembly protein (NAP) family. In terms of assembly, can form homomeric and heteromeric protein complexes with NAP1;2, NAP1;3 and NAP1;4. Binds histone H2A. Interacts with PP438/PNM1. Post-translationally, prenylation of the protein is required for its function during the cell proliferation phase of leaf development. As to expression, ubiquitous.

The protein localises to the nucleus. Its subcellular location is the cytoplasm. In terms of biological role, may modulate chromatin structure by regulation of nucleosome assembly/disassembly. Contributes to the regulation of cell proliferation and cell expansion. May function in nucleotide excision repair (NER). Involved in somatic homologous recombination. The protein is Nucleosome assembly protein 1;1 (NAP1;1) of Arabidopsis thaliana (Mouse-ear cress).